Here is a 106-residue protein sequence, read N- to C-terminus: MSTAIAQQKIRIRLKAFDRRMLDLSCDKIIETADQTAATAIGPIPLPTKRKIYCVLRSPHVDKDSREHFETRTHRRIIDIYSPSAKTIDALMKLDLPSGVDIEVKL.

Belongs to the universal ribosomal protein uS10 family. In terms of assembly, part of the 30S ribosomal subunit.

In terms of biological role, involved in the binding of tRNA to the ribosomes. This chain is Small ribosomal subunit protein uS10, found in Parasynechococcus marenigrum (strain WH8102).